The chain runs to 138 residues: Histone H2AX (138 aa).

Residues 1–23 are disordered; that stretch reads MSTTGKGGKAKGKTASSKQVSRS. Ser2 is modified (N-acetylserine). Residues Lys6, Lys9, Lys11, Lys13, and Lys18 each carry the N6-acetyllysine modification. Ser123 carries the phosphoserine modification. Residue Lys124 forms a Glycyl lysine isopeptide (Lys-Gly) (interchain with G-Cter in ubiquitin) linkage. Residues Ser125, Ser130, and Ser135 each carry the phosphoserine modification. The [ST]-Q motif signature appears at 135–136; it reads SQ.

It belongs to the histone H2A family. In terms of assembly, the nucleosome is a histone octamer containing two molecules each of H2A, H2B, H3 and H4 assembled in one H3-H4 heterotetramer and two H2A-H2B heterodimers. The octamer wraps approximately 147 bp of DNA. Post-translationally, monoubiquitination of Lys-124 gives a specific tag for epigenetic transcriptional repression. Phosphorylated to form H2AX134ph (gamma-H2AX) in response to DNA double-strand breaks (DSBs) generated by exogenous genotoxic agents in both the mitotic MIC and the amitotic MAC. Gamma-H2AX is also found when programmed DNA rearrangements occur, namely homologous recombination in the MIC during prophase of meiosis, and chromosome fragmentation and DNA elimination in developing MACs. Gamma-H2AX is important to recover from exogenous DNA damage and to repair breaks associated with normal micronuclear meiosis and mitosis and macronuclear amitotic division. In terms of processing, acetylation occurs almost exclusively in the MAC.

It localises to the nucleus. The protein resides in the chromosome. Functionally, core component of nucleosome which plays a central role in DNA double strand break (DSB) repair. Nucleosomes wrap and compact DNA into chromatin, limiting DNA accessibility to the cellular machineries which require DNA as a template. Histones thereby play a central role in transcription regulation, DNA repair, DNA replication and chromosomal stability. DNA accessibility is regulated via a complex set of post-translational modifications of histones, also called histone code, and nucleosome remodeling. The sequence is that of Histone H2AX (HTA1) from Tetrahymena thermophila (strain SB210).